The sequence spans 125 residues: Small ribosomal subunit protein eS8 (125 aa).

Residues 1–11 (MAISQGKSTRL) are compositionally biased toward polar residues. Residues 1–38 (MAISQGKSTRLPSGARNVANRGKRKAELGRDPAETRVD) form a disordered region. The span at 25–38 (KAELGRDPAETRVD) shows a compositional bias: basic and acidic residues.

Belongs to the eukaryotic ribosomal protein eS8 family. Part of the 30S ribosomal subunit.

The polypeptide is Small ribosomal subunit protein eS8 (Methanobrevibacter smithii (strain ATCC 35061 / DSM 861 / OCM 144 / PS)).